We begin with the raw amino-acid sequence, 118 residues long: Small ribosomal subunit protein uS13 (118 aa).

The segment at 94–118 (SLPLRGQRTKTNARTRKGPRKPIKK) is disordered.

It belongs to the universal ribosomal protein uS13 family. As to quaternary structure, part of the 30S ribosomal subunit. Forms a loose heterodimer with protein S19. Forms two bridges to the 50S subunit in the 70S ribosome.

Its function is as follows. Located at the top of the head of the 30S subunit, it contacts several helices of the 16S rRNA. In the 70S ribosome it contacts the 23S rRNA (bridge B1a) and protein L5 of the 50S subunit (bridge B1b), connecting the 2 subunits; these bridges are implicated in subunit movement. Contacts the tRNAs in the A and P-sites. The chain is Small ribosomal subunit protein uS13 from Shewanella amazonensis (strain ATCC BAA-1098 / SB2B).